A 150-amino-acid chain; its full sequence is MKYQQLENLESGWKWKYLVKKHREGELITRYIEASAAQEAVDVLLSLENEPVLVNGWIDKHMNPELVNRMKQTIRARRKRHFNAEHQHTRKKSIDLEFIVWQRLAGLAQRRGKTLSETIVQLIEDAENKEKYANKMSSLKLDLQALLGKE.

Belongs to the MatP family. Homodimer.

It is found in the cytoplasm. In terms of biological role, required for spatial organization of the terminus region of the chromosome (Ter macrodomain) during the cell cycle. Prevents early segregation of duplicated Ter macrodomains during cell division. Binds specifically to matS, which is a 13 bp signature motif repeated within the Ter macrodomain. The sequence is that of Macrodomain Ter protein from Shigella boydii serotype 18 (strain CDC 3083-94 / BS512).